We begin with the raw amino-acid sequence, 248 residues long: DNA repair protein RecO (248 aa).

Belongs to the RecO family.

Functionally, involved in DNA repair and RecF pathway recombination. In Bacillus cereus (strain 03BB102), this protein is DNA repair protein RecO.